The sequence spans 94 residues: Acylphosphatase (94 aa).

Residues 8-94 (RLTAWVHGRV…REQITGFHER (87 aa)) form the Acylphosphatase-like domain. Residues arginine 23 and asparagine 41 contribute to the active site.

The protein belongs to the acylphosphatase family.

It carries out the reaction an acyl phosphate + H2O = a carboxylate + phosphate + H(+). In Mycobacterium sp. (strain KMS), this protein is Acylphosphatase (acyP).